The sequence spans 432 residues: Serine hydroxymethyltransferase (432 aa).

(6S)-5,6,7,8-tetrahydrofolate contacts are provided by residues leucine 127 and 131-133 (GHL). Position 236 is an N6-(pyridoxal phosphate)lysine (lysine 236).

The protein belongs to the SHMT family. In terms of assembly, homodimer. The cofactor is pyridoxal 5'-phosphate.

It is found in the cytoplasm. It carries out the reaction (6R)-5,10-methylene-5,6,7,8-tetrahydrofolate + glycine + H2O = (6S)-5,6,7,8-tetrahydrofolate + L-serine. Its pathway is one-carbon metabolism; tetrahydrofolate interconversion. It functions in the pathway amino-acid biosynthesis; glycine biosynthesis; glycine from L-serine: step 1/1. Its function is as follows. Catalyzes the reversible interconversion of serine and glycine with tetrahydrofolate (THF) serving as the one-carbon carrier. This reaction serves as the major source of one-carbon groups required for the biosynthesis of purines, thymidylate, methionine, and other important biomolecules. Also exhibits THF-independent aldolase activity toward beta-hydroxyamino acids, producing glycine and aldehydes, via a retro-aldol mechanism. In Rhizobium johnstonii (strain DSM 114642 / LMG 32736 / 3841) (Rhizobium leguminosarum bv. viciae), this protein is Serine hydroxymethyltransferase.